A 476-amino-acid polypeptide reads, in one-letter code: Protein THYLAKOID RHODANESE-LIKE, chloroplastic (476 aa).

A chloroplast-targeting transit peptide spans 1–21 (MAATTTILSSAAPTPLTAPPR). Residues 1–29 (MAATTTILSSAAPTPLTAPPRARARAPAA) form a disordered region. The segment covering 11–21 (AAPTPLTAPPR) has biased composition (low complexity). A thylakoid-targeting transit peptide spans 22–58 (ARARAPAARRRRLRARDILGAALGLANGGASAALAAP). The helical transmembrane segment at 100–120 (LVAAAGVAAVALPLVLAQVLG) threads the bilayer. Residues 140-246 (EEPGAQLVDI…WLSSSLPWTA (107 aa)) enclose the Rhodanese domain. The next 2 membrane-spanning stretches (helical) occupy residues 264–284 (LPVT…YTEI) and 287–307 (VLQF…LIYA). Residues 342 to 476 (LPSTGTKSQP…PPSSPSPSAP (135 aa)) are disordered. Low complexity predominate over residues 351-389 (PAITEAAPATAEAAPAAATATAAPPAAPVEETSTEAAPA). The segment covering 403–412 (LKPPSSPSPL) has biased composition (pro residues). A compositionally biased stretch (low complexity) spans 425-446 (ESAATESAPAVNSAPVAEAAPE). A compositionally biased stretch (pro residues) spans 447–476 (AAPPAAPRPLSPYPNYPDLKPPSSPSPSAP).

As to quaternary structure, component of high molecular weight thylakoid LFNRs-containing protein complexes containing LIR1, LFNR1, LFNR2, TIC62 and TROL proteins.

It localises to the plastid. The protein localises to the chloroplast thylakoid membrane. Rhodanese domain-containing protein required for anchoring ferredoxin--NADP reductase to the thylakoid membranes and sustaining efficient linear electron flow (LEF). The protein is Protein THYLAKOID RHODANESE-LIKE, chloroplastic of Oryza sativa subsp. indica (Rice).